We begin with the raw amino-acid sequence, 141 residues long: Putative inactive deoxyuridine 5'-triphosphate nucleotidohydrolase-like protein FLJ16323 (141 aa).

It belongs to the dUTPase family.

The polypeptide is Putative inactive deoxyuridine 5'-triphosphate nucleotidohydrolase-like protein FLJ16323 (Homo sapiens (Human)).